The following is a 395-amino-acid chain: S-adenosylmethionine synthase (395 aa).

Histidine 18 contributes to the ATP binding site. A Mg(2+)-binding site is contributed by aspartate 20. A K(+)-binding site is contributed by glutamate 46. L-methionine is bound by residues glutamate 59 and glutamine 103. Positions 103-113 (QSADIAVGVDS) are flexible loop. ATP is bound by residues 170-172 (DAK), 235-236 (KF), aspartate 244, 250-251 (RK), alanine 267, and lysine 271. Position 244 (aspartate 244) interacts with L-methionine. Residue lysine 275 coordinates L-methionine.

The protein belongs to the AdoMet synthase family. Homotetramer; dimer of dimers. It depends on Mg(2+) as a cofactor. K(+) is required as a cofactor.

The protein resides in the cytoplasm. It catalyses the reaction L-methionine + ATP + H2O = S-adenosyl-L-methionine + phosphate + diphosphate. The protein operates within amino-acid biosynthesis; S-adenosyl-L-methionine biosynthesis; S-adenosyl-L-methionine from L-methionine: step 1/1. Its function is as follows. Catalyzes the formation of S-adenosylmethionine (AdoMet) from methionine and ATP. The overall synthetic reaction is composed of two sequential steps, AdoMet formation and the subsequent tripolyphosphate hydrolysis which occurs prior to release of AdoMet from the enzyme. In Granulibacter bethesdensis (strain ATCC BAA-1260 / CGDNIH1), this protein is S-adenosylmethionine synthase.